We begin with the raw amino-acid sequence, 476 residues long: Probable cytosolic Fe-S cluster assembly factor GH10760 (476 aa).

Positions 23, 68, 71, 74, 187, 243, 395, and 399 each coordinate [4Fe-4S] cluster.

It belongs to the NARF family.

Its function is as follows. Component of the cytosolic iron-sulfur (Fe/S) protein assembly machinery. Required for maturation of extramitochondrial Fe/S proteins. The chain is Probable cytosolic Fe-S cluster assembly factor GH10760 from Drosophila grimshawi (Hawaiian fruit fly).